A 2228-amino-acid chain; its full sequence is Genome polyprotein (2228 aa).

The interval 56-76 is disordered; it reads AEVGAHQSEPLKTSVDKPGSK. 2 short sequence motifs ((L)YPX(n)L motif) span residues 167 to 171 and 200 to 205; these read YPHGL and YPVWEL. An involved in P1-2A pentamerization region spans residues 766–836; it reads MLDRIALGDL…PRKIKGVFSQ (71 aa). The helical transmembrane segment at 1011 to 1031 threads the bilayer; the sequence is TVEIINTVLCFVKSGILLYVI. The tract at residues 1043–1070 is membrane-penetrating ability; it reads IGLLRVMNYADIGCSVISCGKVFSKMLE. A coiled-coil region spans residues 1127-1152; sequence NKKDVLNILKDNQQKIERAIEEADNF. The SF3 helicase domain occupies 1204–1366; the sequence is HQKLKNLGSI…SFFKNPHNDM (163 aa). 1230–1237 lines the ATP pocket; sequence GKRGGGKS. The chain crosses the membrane as a helical span at residues 1462 to 1482; it reads WVAVGAAVGVLGVLVGGWYVY. The residue at position 1499 (tyrosine 1499) is an O-(5'-phospho-RNA)-tyrosine. One can recognise a Peptidase C3 domain in the interval 1514–1728; it reads DPVESQSTLE…VAKLVTQEMF (215 aa). Residues histidine 1563, aspartate 1603, and cysteine 1691 each act as for protease 3C activity in the active site. Residues 1977–2098 form the RdRp catalytic domain; it reads DVGLDLDFSA…VFSRQVQFDN (122 aa).

The protein belongs to the picornaviridae polyprotein family. In terms of assembly, homodimer. Homomultimer; probably interacts with membranes in a multimeric form. Seems to assemble into amyloid-like fibers. As to quaternary structure, homodimer. Monomer. Interacts with protein 3CD. Interacts with host ACBD3. In terms of assembly, interacts with protein 3AB. As to quaternary structure, interacts with human MAVS. Homodimer; disulfide-linked. In terms of assembly, homopentamer. Homooligomer. As to quaternary structure, interacts with capsid protein VP2. Interacts with capsid protein VP3. Interacts with capsid protein VP1. Interacts with capsid protein VP3. In terms of assembly, interacts with capsid protein VP1. Interacts with capsid protein VP2. Specific enzymatic cleavages by viral protease in vivo yield a variety of precursors and mature proteins. Polyprotein processing intermediates are produced, such as P1-2A which is a functional precursor of the structural proteins, VP0 which is a VP4-VP2 precursor, VP1-2A precursor, 3ABC precursor which is a stable and catalytically active precursor of 3A, 3B and 3C proteins, 3AB and 3CD precursors. The assembly signal 2A is removed from VP1-2A by a host protease, possibly host Cathepsin L. This cleavage occurs over a region of 3 amino-acids probably generating VP1 proteins with heterogeneous C-termini. Post-translationally, during virion maturation, immature virions are rendered infectious following cleavage of VP0 into VP4 and VP2. This maturation seems to be an autocatalytic event triggered by the presence of RNA in the capsid and is followed by a conformational change of the particle. In terms of processing, the assembly signal 2A is removed from VP1-2A by a host protease, possibly host Cathepsin L in naked virions. This cleavage does not occur in enveloped virions. This cleavage occurs over a region of 3 amino-acids probably generating VP1 proteins with heterogeneous C-termini. VPg is uridylylated prior to priming replication into VPg-pUpU. Post-translationally, unlike other picornaviruses, does not seem to be myristoylated.

The protein localises to the virion. It localises to the host endosome. The protein resides in the host multivesicular body. Its subcellular location is the host membrane. It is found in the host mitochondrion outer membrane. The protein localises to the host cytoplasm. It localises to the host cytoplasmic vesicle membrane. The catalysed reaction is RNA(n) + a ribonucleoside 5'-triphosphate = RNA(n+1) + diphosphate. The enzyme catalyses a ribonucleoside 5'-triphosphate + H2O = a ribonucleoside 5'-diphosphate + phosphate + H(+). It catalyses the reaction Selective cleavage of Gln-|-Gly bond in the poliovirus polyprotein. In other picornavirus reactions Glu may be substituted for Gln, and Ser or Thr for Gly.. Its function is as follows. Capsid proteins VP1, VP2, and VP3 form a closed capsid enclosing the viral positive strand RNA genome. All these proteins contain a beta-sheet structure called beta-barrel jelly roll. Together they form an icosahedral capsid (T=3) composed of 60 copies of each VP1, VP2, and VP3, with a diameter of approximately 300 Angstroms. VP1 is situated at the 12 fivefold axes, whereas VP2 and VP3 are located at the quasi-sixfold axes. The naked capsid interacts with the host receptor HAVCR1 to provide virion attachment to and probably entry into the target cell. Functionally, VP0 precursor is a component of the immature procapsids. In terms of biological role, plays a role in the assembly of the 12 pentamers into an icosahedral structure. Has not been detected in mature virions, supposedly owing to its small size. Precursor component of immature procapsids that corresponds to an extended form of the structural protein VP1. After maturation, possibly by the host Cathepsin L, the assembly signal 2A is cleaved to give rise to the mature VP1 protein. Its function is as follows. Functions as a viroporin. Affects membrane integrity and causes an increase in membrane permeability. Involved in host intracellular membrane rearrangements probably to give rise to the viral factories. Does not disrupt calcium homeostasis or glycoprotein trafficking. Antagonizes the innate immune response of the host by suppressing IFN-beta synthesis, which it achieves by interfering with the RIG-I/IFIH1 pathway. Functionally, affects membrane integrity and causes an increase in membrane permeability. In terms of biological role, associates with and induces structural rearrangements of intracellular membranes. Displays RNA-binding activity. The precursor 3ABC is targeted to the mitochondrial membrane where protease 3C activity cleaves and inhibits the host antiviral protein MAVS, thereby disrupting activation of IRF3 through the IFIH1/MDA5 pathway. In vivo, the protease activity of 3ABC precursor is more efficient in cleaving the 2BC precursor than that of protein 3C. The 3ABC precursor may therefore play a role in the proteolytic processing of the polyprotein. Possible viroporin. Its function is as follows. Interacts with the 3CD precursor and with RNA structures found at both the 5'- and 3'-termini of the viral genome. Since the 3AB precursor contains the hydrophobic domain 3A, it probably anchors the whole viral replicase complex to intracellular membranes on which viral RNA synthesis occurs. Functionally, may serve as membrane anchor to the 3AB and 3ABC precursors via its hydrophobic domain. May interact with RNA. In terms of biological role, acts as a primer for viral RNA replication and remains covalently bound to viral genomic RNA. VPg is uridylylated prior to priming replication into VPg-pUpU. The VPg-pUpU is then used as primer on the genomic RNA poly(A) by the RNA-dependent RNA polymerase to replicate the viral genome. Cysteine protease that generates mature viral proteins from the precursor polyprotein. In addition to its proteolytic activity, it binds to viral RNA, and thus influences viral genome replication. RNA and substrate bind cooperatively to the protease. Cleaves IKBKG/NEMO to impair innate immune signaling. Cleaves host PABPC1 which may participate in the switch of viral translation to RNA synthesis. Its function is as follows. Interacts with the 3AB precursor and with RNA structures found at both the 5'- and 3'-termini of the viral genome. Disrupts TLR3 signaling by degrading the host adapter protein TICAM1/TRIF. Functionally, RNA-directed RNA polymerase 3D-POL replicates genomic and antigenomic RNA by recognizing replications specific signals. The polypeptide is Genome polyprotein (Cercopithecus hamlyni (Owl-faced monkey)).